The chain runs to 205 residues: Holliday junction branch migration complex subunit RuvA (205 aa).

Positions Met-1–Met-64 are domain I. The tract at residues Ser-65–Ile-143 is domain II. Residues Gly-144–Val-153 are flexible linker. A domain III region spans residues Val-153–Arg-205.

Belongs to the RuvA family. Homotetramer. Forms an RuvA(8)-RuvB(12)-Holliday junction (HJ) complex. HJ DNA is sandwiched between 2 RuvA tetramers; dsDNA enters through RuvA and exits via RuvB. An RuvB hexamer assembles on each DNA strand where it exits the tetramer. Each RuvB hexamer is contacted by two RuvA subunits (via domain III) on 2 adjacent RuvB subunits; this complex drives branch migration. In the full resolvosome a probable DNA-RuvA(4)-RuvB(12)-RuvC(2) complex forms which resolves the HJ.

It localises to the cytoplasm. The RuvA-RuvB-RuvC complex processes Holliday junction (HJ) DNA during genetic recombination and DNA repair, while the RuvA-RuvB complex plays an important role in the rescue of blocked DNA replication forks via replication fork reversal (RFR). RuvA specifically binds to HJ cruciform DNA, conferring on it an open structure. The RuvB hexamer acts as an ATP-dependent pump, pulling dsDNA into and through the RuvAB complex. HJ branch migration allows RuvC to scan DNA until it finds its consensus sequence, where it cleaves and resolves the cruciform DNA. The chain is Holliday junction branch migration complex subunit RuvA from Allorhizobium ampelinum (strain ATCC BAA-846 / DSM 112012 / S4) (Agrobacterium vitis (strain S4)).